A 327-amino-acid polypeptide reads, in one-letter code: COP9 signalosome complex subunit 6 (327 aa).

One can recognise an MPN domain in the interval 41–174 (VALHPLVILN…VSVFESVIDI (134 aa)). Positions 211 to 327 (SGENSTVAEH…IGRRMRGLFF (117 aa)) are interaction with Vpr.

It belongs to the peptidase M67A family. CSN6 subfamily. Component of the CSN complex, composed of COPS1/GPS1, COPS2, COPS3, COPS4, COPS5, COPS6, COPS7 (COPS7A or COPS7B), COPS8 and COPS9 isoform 1. In the complex, it probably interacts directly with COPS2, COPS4, COPS5, COPS7 (COPS7A or COPS7B) and COPS9 isoform 1. Interacts with the translation initiation factor EIF3S6. Interacts weakly with RBX1. Directly interacts with COP1 and 14-3-3 protein sigma/SFN. Interacts with ERCC6. As to quaternary structure, (Microbial infection) Interacts with the HIV-1 protein Vpr. Widely expressed.

The protein resides in the nucleus. It localises to the cytoplasm. The protein localises to the perinuclear region. Functionally, component of the COP9 signalosome complex (CSN), a complex involved in various cellular and developmental processes. The CSN complex is an essential regulator of the ubiquitin (Ubl) conjugation pathway by mediating the deneddylation of the cullin subunits of SCF-type E3 ligase complexes, leading to decrease the Ubl ligase activity of SCF-type complexes such as SCF, CSA or DDB2. The complex is also involved in phosphorylation of p53/TP53, c-jun/JUN, IkappaBalpha/NFKBIA, ITPK1 and IRF8, possibly via its association with CK2 and PKD kinases. CSN-dependent phosphorylation of TP53 and JUN promotes and protects degradation by the Ubl system, respectively. Has some glucocorticoid receptor-responsive activity. Stabilizes COP1 through reducing COP1 auto-ubiquitination and decelerating COP1 turnover rate, hence regulates the ubiquitination of COP1 targets. This Homo sapiens (Human) protein is COP9 signalosome complex subunit 6 (COPS6).